Consider the following 754-residue polypeptide: Polyribonucleotide nucleotidyltransferase (754 aa).

Mg(2+)-binding residues include D525 and D531. One can recognise a KH domain in the interval 591-650; sequence PRITTIKVPVDKIGEVIGPKGKMINSITEETGASISIEDDGTVFVGASNGEAAQAAIDKI. In terms of domain architecture, S1 motif spans 662 to 731; the sequence is GERFLGTVVK…NRGKISLVLV (70 aa).

Belongs to the polyribonucleotide nucleotidyltransferase family. The cofactor is Mg(2+).

It localises to the cytoplasm. The enzyme catalyses RNA(n+1) + phosphate = RNA(n) + a ribonucleoside 5'-diphosphate. Functionally, involved in mRNA degradation. Catalyzes the phosphorolysis of single-stranded polyribonucleotides processively in the 3'- to 5'-direction. The protein is Polyribonucleotide nucleotidyltransferase of Mycolicibacterium vanbaalenii (strain DSM 7251 / JCM 13017 / BCRC 16820 / KCTC 9966 / NRRL B-24157 / PYR-1) (Mycobacterium vanbaalenii).